Here is a 580-residue protein sequence, read N- to C-terminus: Type II methyltransferase M.BanIII (580 aa).

It belongs to the N(4)/N(6)-methyltransferase family.

It carries out the reaction a 2'-deoxyadenosine in DNA + S-adenosyl-L-methionine = an N(6)-methyl-2'-deoxyadenosine in DNA + S-adenosyl-L-homocysteine + H(+). A gamma subtype methylase, recognizes the double-stranded sequence 5'-ATCGAT-3', methylates A-5 on both strands, and protects the DNA from cleavage by the BanIII endonuclease. This is Type II methyltransferase M.BanIII (banIIIM) from Aneurinibacillus aneurinilyticus (Bacillus aneurinolyticus).